The sequence spans 249 residues: Large ribosomal subunit protein uL1 (249 aa).

The protein belongs to the universal ribosomal protein uL1 family. Part of the 50S ribosomal subunit.

In terms of biological role, binds directly to 23S rRNA. The L1 stalk is quite mobile in the ribosome, and is involved in E site tRNA release. Functionally, protein L1 is also a translational repressor protein, it controls the translation of the L11 operon by binding to its mRNA. The polypeptide is Large ribosomal subunit protein uL1 (Orientia tsutsugamushi (strain Ikeda) (Rickettsia tsutsugamushi)).